The sequence spans 359 residues: UPF0283 membrane protein RL2646 (359 aa).

Residues 1-48 (MSKPPSDPPRRAPAAFIYEDEATERRDNGRQGGERRKPESFSEHIVVT) are disordered. The segment covering 23 to 42 (TERRDNGRQGGERRKPESFS) has biased composition (basic and acidic residues). The next 2 membrane-spanning stretches (helical) occupy residues 77–97 (FGKI…GLWT) and 111–131 (LGYA…ALVI).

Belongs to the UPF0283 family.

It is found in the cell inner membrane. This is UPF0283 membrane protein RL2646 from Rhizobium johnstonii (strain DSM 114642 / LMG 32736 / 3841) (Rhizobium leguminosarum bv. viciae).